The following is a 279-amino-acid chain: Putative pyruvate, phosphate dikinase regulatory protein (279 aa).

153-160 (GVSRTSKT) is an ADP binding site.

This sequence belongs to the pyruvate, phosphate/water dikinase regulatory protein family. PDRP subfamily.

The enzyme catalyses N(tele)-phospho-L-histidyl/L-threonyl-[pyruvate, phosphate dikinase] + ADP = N(tele)-phospho-L-histidyl/O-phospho-L-threonyl-[pyruvate, phosphate dikinase] + AMP + H(+). It carries out the reaction N(tele)-phospho-L-histidyl/O-phospho-L-threonyl-[pyruvate, phosphate dikinase] + phosphate + H(+) = N(tele)-phospho-L-histidyl/L-threonyl-[pyruvate, phosphate dikinase] + diphosphate. In terms of biological role, bifunctional serine/threonine kinase and phosphorylase involved in the regulation of the pyruvate, phosphate dikinase (PPDK) by catalyzing its phosphorylation/dephosphorylation. This Bradyrhizobium diazoefficiens (strain JCM 10833 / BCRC 13528 / IAM 13628 / NBRC 14792 / USDA 110) protein is Putative pyruvate, phosphate dikinase regulatory protein.